The chain runs to 405 residues: Transposase from transposon Tn1545 (405 aa).

The Core-binding (CB) domain occupies 79 to 163; it reads GKKMTLCQLY…SLKASFYIAI (85 aa). The Tyr recombinase domain occupies 186 to 392; that stretch reads VPKTVLTEEQ…TFDSAMAEMK (207 aa). Catalysis depends on residues Arg-225, Lys-264, His-343, Arg-346, and His-369. The active-site O-(3'-phospho-DNA)-tyrosine intermediate is the Tyr-379.

Belongs to the 'phage' integrase family.

This Streptococcus agalactiae serotype V (strain ATCC BAA-611 / 2603 V/R) protein is Transposase from transposon Tn1545 (int).